We begin with the raw amino-acid sequence, 309 residues long: ATP synthase gamma chain (309 aa).

This sequence belongs to the ATPase gamma chain family. As to quaternary structure, F-type ATPases have 2 components, CF(1) - the catalytic core - and CF(0) - the membrane proton channel. CF(1) has five subunits: alpha(3), beta(3), gamma(1), delta(1), epsilon(1). CF(0) has three main subunits: a, b and c.

The protein localises to the cell membrane. In terms of biological role, produces ATP from ADP in the presence of a proton gradient across the membrane. The gamma chain is believed to be important in regulating ATPase activity and the flow of protons through the CF(0) complex. The sequence is that of ATP synthase gamma chain from Mycolicibacterium vanbaalenii (strain DSM 7251 / JCM 13017 / BCRC 16820 / KCTC 9966 / NRRL B-24157 / PYR-1) (Mycobacterium vanbaalenii).